The chain runs to 1219 residues: Pheromone-regulated membrane protein 10 (1219 aa).

Residues 1–11 (MMRTQSDEHVA) are compositionally biased toward basic and acidic residues. Disordered regions lie at residues 1 to 273 (MMRT…IERE), 303 to 490 (LASF…DPFT), 503 to 533 (HDDDEDEDNHGNFLTYDAADGSVTPTHEDYV), and 555 to 713 (EGNK…RPVK). Acidic residues predominate over residues 42–53 (DENDDGHDDSDE). Over residues 57–68 (SVVIPTPSVVIV) the composition is skewed to low complexity. Polar residues predominate over residues 104–115 (LKSPGTPTTYSP). Low complexity predominate over residues 136–155 (GSSLSSTTLMNTLLNSSGLG). 2 stretches are compositionally biased toward acidic residues: residues 159 to 171 (TESEEDDDEDEEV) and 219 to 231 (QEEETVASTDDDG). Basic and acidic residues-rich tracts occupy residues 259–273 (ADRAARADAPLIERE), 330–346 (DDQRDQRDSHLALRREN), and 395–421 (LDRRLEDIKEKRAEDKEKRAEDNEKER). Over residues 422–432 (QHHHHNHHHHH) the composition is skewed to basic residues. Positions 435-446 (ETGPNTGASSPF) are enriched in polar residues. Residues 448–470 (EEEKDREAEEAEILRDQARDLVN) are compositionally biased toward basic and acidic residues. A compositionally biased stretch (low complexity) spans 565-577 (TTVGDGTSTGDVS). Residues 598-615 (KSKTKTTQKLGLKKKKKE) are compositionally biased toward basic residues. Positions 616 to 641 (LLKIIEDQRKEKEENKKRPKWYDKSR) are enriched in basic and acidic residues. Low complexity predominate over residues 642 to 652 (STSPSPGGTPA). Positions 653-673 (PHHHHHIPGLHLHHHTKGHQR) are enriched in basic residues. Residues 693 to 713 (GGDKPPDRPRSLRSEALRPVK) are compositionally biased toward basic and acidic residues. 10 helical membrane passes run 864-884 (PPWLCVIFFACGTGVVSPYAF), 888-908 (WADIPMCIILGSVVGFFQIIV), 918-938 (VFEVSMSILISFLARAIGTIS), 945-965 (FCFAAIAQGSLAIILPGYIVL), 983-1003 (MFYAVIYSMFLGFGITLGAVV), 1021-1041 (LDPLWRILFVPLYSFFIALVN), 1049-1069 (PSMLLISGAGYTVTYFVGANI), 1075-1095 (SSYLTSAIGAFTIGILGNLYS), 1100-1120 (GLAFAAMLPGIFVQVPSGVAS), and 1184-1204 (LGFTMIQVAIGITVGLFAATL).

Belongs to the ThrE exporter (TC 2.A.79) family.

The protein localises to the membrane. This Yarrowia lipolytica (strain CLIB 122 / E 150) (Yeast) protein is Pheromone-regulated membrane protein 10.